We begin with the raw amino-acid sequence, 605 residues long: MSDNKGTKLDPKECCSAWLSLEAECSDSSLDGDLEKLFDEGTDSDISDLIDDGDAVQGNSRELFCQQESEESEQQTQLLKRKYISPQAVLQLSPQLESISLSPQHKPKRRLFEQDSGLECSVNEAEDLSETQVEEVPANPPTTAQGTKGLGIVKDLLKHSNVKAVLMAKFKEAFGVGFAELTRQYKSNKTCCRDWVIAVYAVNDDLIESSKQLLLQHCAYIWLHYMPPMCLYLLCFNVGKSRETVCRLLSTLLQVSEVQLLSEPPKLRSVCAALFWYKGSMNPNVYAHGAYPEWILTQTLINHQSANATQFDLSTMIQFAYDHEYFDEATIAYQYAKLAETDANARAFLQSNSQARLVKECATMVRHYMRGEMKEMSMSTWIHRKLLTVESNGQWSDIVRFIRYQDINFIEFLTVFKAFLQNKPKQNCLLFHGPPDTGKSMFTMSLISVLKGKVLSFANCKSTFWLQPIADTKLALIDDVTHVCWEYIDQYLRNGLDGNYVCLDMKHRAPCQMKFPPLMLTSNIDITKDQKYKYLHSRVKSFAFNNKFPLDANHKPQFELTDQSWKSFFKRLWTQLDLSDQEDEGEDGNSQRTFQCTARDFNGPV.

Positions 80–82 (KRK) match the Nuclear localization signal motif. Phosphoserine; by host is present on residues Ser85 and Ser93. The Nuclear export signal signature appears at 92 to 101 (LSPQLESISL). Positions 145 to 308 (QGTKGLGIVK…TLINHQSANA (164 aa)) are DNA-binding region. Positions 407–557 (INFIEFLTVF…FPLDANHKPQ (151 aa)) constitute an SF3 helicase domain. 433 to 440 (GPPDTGKS) serves as a coordination point for ATP. Residue Lys514 forms a Glycyl lysine isopeptide (Lys-Gly) (interchain with G-Cter in SUMO) linkage.

Belongs to the papillomaviridae E1 protein family. In terms of assembly, can form hexamers. Interacts with E2 protein; this interaction increases E1 DNA binding specificity. Interacts with host DNA polymerase subunit POLA2. Interacts with host single stranded DNA-binding protein RPA1. Interacts with host TOP1; this interaction stimulates the enzymatic activity of TOP1. In terms of processing, phosphorylated. Post-translationally, sumoylated.

The protein resides in the host nucleus. The enzyme catalyses Couples ATP hydrolysis with the unwinding of duplex DNA by translocating in the 3'-5' direction.. It carries out the reaction ATP + H2O = ADP + phosphate + H(+). Its function is as follows. ATP-dependent DNA 3'-5' helicase required for initiation of viral DNA replication. It forms a complex with the viral E2 protein. The E1-E2 complex binds to the replication origin which contains binding sites for both proteins. During the initial step, a dimer of E1 interacts with a dimer of protein E2 leading to a complex that binds the viral origin of replication with high specificity. Then, a second dimer of E1 displaces the E2 dimer in an ATP-dependent manner to form the E1 tetramer. Following this, two E1 monomers are added to each half of the site, which results in the formation of two E1 trimers on the viral ori. Subsequently, two hexamers will be created. The double hexamer acts as a bi-directional helicase machinery and unwinds the viral DNA and then recruits the host DNA polymerase to start replication. The chain is Replication protein E1 from Homo sapiens (Human).